The chain runs to 198 residues: ATP-dependent Clp protease proteolytic subunit (198 aa).

The active-site Nucleophile is serine 103. The active site involves histidine 128.

It belongs to the peptidase S14 family. In terms of assembly, fourteen ClpP subunits assemble into 2 heptameric rings which stack back to back to give a disk-like structure with a central cavity, resembling the structure of eukaryotic proteasomes.

It localises to the cytoplasm. The catalysed reaction is Hydrolysis of proteins to small peptides in the presence of ATP and magnesium. alpha-casein is the usual test substrate. In the absence of ATP, only oligopeptides shorter than five residues are hydrolyzed (such as succinyl-Leu-Tyr-|-NHMec, and Leu-Tyr-Leu-|-Tyr-Trp, in which cleavage of the -Tyr-|-Leu- and -Tyr-|-Trp bonds also occurs).. Cleaves peptides in various proteins in a process that requires ATP hydrolysis. Has a chymotrypsin-like activity. Plays a major role in the degradation of misfolded proteins. In Ruthia magnifica subsp. Calyptogena magnifica, this protein is ATP-dependent Clp protease proteolytic subunit.